The sequence spans 38 residues: Phospholipase A2 2 (38 aa).

Residues Tyr28, Gly30, and Gly32 each coordinate Ca(2+).

Belongs to the phospholipase A2 family. Group I subfamily. The cofactor is Ca(2+). In terms of tissue distribution, expressed by the venom gland.

It is found in the secreted. The enzyme catalyses a 1,2-diacyl-sn-glycero-3-phosphocholine + H2O = a 1-acyl-sn-glycero-3-phosphocholine + a fatty acid + H(+). Functionally, snake venom phospholipase A2 (PLA2) that inhibits neuromuscular transmission by blocking acetylcholine release from the nerve termini. PLA2 catalyzes the calcium-dependent hydrolysis of the 2-acyl groups in 3-sn-phosphoglycerides. This Calliophis bivirgatus (Blue Malaysian coral snake) protein is Phospholipase A2 2.